The chain runs to 256 residues: MLEILQIPVLEDNYVYLLHEPGSGATAAVDPAVAGPVLEALDARGWRLGHVLNTHHHGDHVGGNLELKAATGCTVVGAAGDRHRIPGIDVALKDGEEFRLGSASARMLDVPGHTSGHVAFWFEDDAALFCGDTLFALGCGRLFEGSAEQMWRSLERLRALPAETKVFCAHEYTQANARFAVTIEPGNAALRERVERVEALRREGAATVPSILSEELATNPFLRPESPEIRARLGLPGVPEVEVFAEIRRRKDVFRG.

Residues His-55, His-57, Asp-59, His-60, His-113, Asp-132, and His-170 each contribute to the Zn(2+) site.

Belongs to the metallo-beta-lactamase superfamily. Glyoxalase II family. Monomer. The cofactor is Zn(2+).

The catalysed reaction is an S-(2-hydroxyacyl)glutathione + H2O = a 2-hydroxy carboxylate + glutathione + H(+). It participates in secondary metabolite metabolism; methylglyoxal degradation; (R)-lactate from methylglyoxal: step 2/2. Its function is as follows. Thiolesterase that catalyzes the hydrolysis of S-D-lactoyl-glutathione to form glutathione and D-lactic acid. This is Hydroxyacylglutathione hydrolase from Methylococcus capsulatus (strain ATCC 33009 / NCIMB 11132 / Bath).